The sequence spans 161 residues: Lipoprotein signal peptidase (161 aa).

3 helical membrane passes run I6 to V26, G67 to K87, and V90 to L110. Catalysis depends on residues D121 and D139. Residues A134 to I154 form a helical membrane-spanning segment.

Belongs to the peptidase A8 family.

It is found in the cell inner membrane. It carries out the reaction Release of signal peptides from bacterial membrane prolipoproteins. Hydrolyzes -Xaa-Yaa-Zaa-|-(S,diacylglyceryl)Cys-, in which Xaa is hydrophobic (preferably Leu), and Yaa (Ala or Ser) and Zaa (Gly or Ala) have small, neutral side chains.. It participates in protein modification; lipoprotein biosynthesis (signal peptide cleavage). This protein specifically catalyzes the removal of signal peptides from prolipoproteins. The protein is Lipoprotein signal peptidase of Syntrophus aciditrophicus (strain SB).